An 859-amino-acid polypeptide reads, in one-letter code: Glucans biosynthesis glucosyltransferase H (859 aa).

6 helical membrane-spanning segments follow: residues 144–166 (YILLILMLGQTIVAGSYMKGILP), 200–222 (LLLFGILFCWVSAGFWTALMGFL), 523–545 (VMSYLSAPLWFFFLVLSTALLAV), 573–595 (VALFSTTIVLLFLPKLLSVILIW), 608–630 (VTVSMLLEMLFSVLLAPVRMLFH), and 684–706 (SFLWWLAPIVVSLMLSIPVSVIS).

This sequence belongs to the glycosyltransferase 2 family. OpgH subfamily.

The protein localises to the cell inner membrane. The protein operates within glycan metabolism; osmoregulated periplasmic glucan (OPG) biosynthesis. In terms of biological role, involved in the biosynthesis of osmoregulated periplasmic glucans (OPGs). The polypeptide is Glucans biosynthesis glucosyltransferase H (Pseudomonas syringae pv. tomato (strain ATCC BAA-871 / DC3000)).